A 196-amino-acid polypeptide reads, in one-letter code: UPF0056 membrane protein BUsg_434 (196 aa).

Helical transmembrane passes span 8–28 (TILL…MTIL), 45–65 (IIAL…LTIL), 71–91 (TVSI…IFPS), 105–125 (FLVP…TLML), 134–154 (MPYL…ILLL), and 174–194 (MGLI…KAWF).

This sequence belongs to the UPF0056 (MarC) family.

The protein localises to the cell membrane. The protein is UPF0056 membrane protein BUsg_434 of Buchnera aphidicola subsp. Schizaphis graminum (strain Sg).